The chain runs to 2863 residues: Lipopolysaccharide-responsive and beige-like anchor protein (2863 aa).

Disordered stretches follow at residues 1–35 (MASEDNRVPSPPPTGDDGGGGGREETPTEGGALSL), 969–1005 (VGSQQPDTKDSPVCPHFTTNGNENSSIEKTSSLESAS), and 1018–1039 (EMKAEQENQELPDEGTLEETLT). At A2 the chain carries N-acetylalanine. 3 positions are modified to phosphoserine: S10, S979, and S1003. Residues 985–1005 (FTTNGNENSSIEKTSSLESAS) show a composition bias toward polar residues. Residues 1006-1053 (NIELQTTNTSYEEMKAEQENQELPDEGTLEETLTNETRNADDLEVSSD) are a coiled coil. The segment covering 1024 to 1034 (ENQELPDEGTL) has biased composition (acidic residues). Residues S1100, S1135, and S1139 each carry the phosphoserine modification. Residues 1161–1176 (PVTEKQTDTETQDSKD) are compositionally biased toward basic and acidic residues. Residues 1161–1193 (PVTEKQTDTETQDSKDSGIQTMTASGSSAMSPE) form a disordered region. Polar residues predominate over residues 1177-1193 (SGIQTMTASGSSAMSPE). 3 positions are modified to phosphoserine: S1233, S1247, and S1261. Residues 1301-1343 (STVFRIPEFNWSQMHQRLLTDLLFSIETDIQMWRSHSTKTVMD) form a WD 1 repeat. S1488 and S1498 each carry phosphoserine. A helical membrane pass occupies residues 1531–1548 (FLALAVVYFISVLMVSKY). The span at 1586–1599 (LTTASVEESESTSS) shows a compositional bias: low complexity. Disordered regions lie at residues 1586–1668 (LTTA…KATP) and 1759–1789 (QASDMGGESPGSRSSNAKLPSVPTVDSVSQD). At S1605 the chain carries Phosphoserine. The span at 1650 to 1664 (KSPETKNDRGNDLDT) shows a compositional bias: basic and acidic residues. S1767, S1770, and S2064 each carry phosphoserine. Positions 1769–1789 (GSRSSNAKLPSVPTVDSVSQD) are enriched in polar residues. The 109-residue stretch at 2073 to 2181 (NLAGPVSLST…TVKKVVNYLP (109 aa)) folds into the BEACH-type PH domain. The region spanning 2200–2489 (ASPRQLFKAS…QLLIEPHPPR (290 aa)) is the BEACH domain. Position 2496 is a phosphoserine (S2496). WD repeat units follow at residues 2591–2633 (DQSI…LIQV), 2636–2679 (GHWD…SGIG), 2695–2735 (GHDY…RTLE), 2777–2816 (ETDDNIRAIQLSRDGQYLLTGGDRGVVVVRQVSDLKQLFA), and 2819–2858 (GCDAGIRAMALSYDQRCIISGMASGSIVLFYNDFNRWHHE).

Interacts with TOM1 and TOLLIP. As to expression, ubiquitous.

It localises to the cell membrane. The protein resides in the endoplasmic reticulum membrane. The protein localises to the golgi apparatus. Its subcellular location is the trans-Golgi network membrane. It is found in the lysosome membrane. Its function is as follows. Involved in coupling signal transduction and vesicle trafficking to enable polarized secretion and/or membrane deposition of immune effector molecules. Involved in phagophore growth during mitophagy by regulating ATG9A trafficking to mitochondria. This is Lipopolysaccharide-responsive and beige-like anchor protein from Homo sapiens (Human).